The primary structure comprises 463 residues: Argininosuccinate lyase (463 aa).

Belongs to the lyase 1 family. Argininosuccinate lyase subfamily.

Its subcellular location is the cytoplasm. The catalysed reaction is 2-(N(omega)-L-arginino)succinate = fumarate + L-arginine. Its pathway is amino-acid biosynthesis; L-arginine biosynthesis; L-arginine from L-ornithine and carbamoyl phosphate: step 3/3. This chain is Argininosuccinate lyase, found in Bradyrhizobium sp. (strain BTAi1 / ATCC BAA-1182).